Reading from the N-terminus, the 577-residue chain is F-box/TPR repeat protein pof3 (577 aa).

TPR repeat units lie at residues 6–39 (VKAI…EPNP), 41–74 (IDLF…NARN), and 76–108 (RGYL…VHKM). The region spanning 138–180 (ILPREVLLCILQQLNFKSIVQCMQVCKHWRDCIKKEPSLFCCL) is the F-box domain.

As to quaternary structure, a part of the E3 ubiquitin ligase Skp1-Cullin-1-F-box (SCF) complex. Interacts with cul1, mcl1 and skp1.

The protein resides in the mitochondrion. Its subcellular location is the nucleus. Has a role in substrate recognition in the Skp1-Cullin-1/Cdc53-F-box (SCF) ubiquitin ligase complex. Required for the maintenance of telomere length and transcriptional silencing at the telomere. Also required for chromosome segregation. In Schizosaccharomyces pombe (strain 972 / ATCC 24843) (Fission yeast), this protein is F-box/TPR repeat protein pof3 (pof3).